The chain runs to 388 residues: Amylovoran biosynthesis protein AmsL (388 aa).

Helical transmembrane passes span 24–44, 47–67, 97–117, 231–251, 297–317, and 359–379; these read VLLS…ISWF, LPQL…LGSL, FTVI…LGLF, FVIM…SPVI, FYWN…VWIW, and ISVS…NLFI.

This sequence belongs to the polysaccharide synthase family.

It is found in the cell membrane. The protein operates within glycan metabolism; exopolysaccharide biosynthesis. In terms of biological role, involved in the biosynthesis of amylovoran which functions as a virulence factor. This chain is Amylovoran biosynthesis protein AmsL (amsL), found in Erwinia amylovora (Fire blight bacteria).